The sequence spans 299 residues: Protease HtpX homolog (299 aa).

The next 2 membrane-spanning stretches (helical) occupy residues 15 to 35 (ILLL…GYLF) and 39 to 59 (GLGG…SMIF). A Zn(2+)-binding site is contributed by histidine 143. Glutamate 144 is a catalytic residue. Histidine 147 contributes to the Zn(2+) binding site. Transmembrane regions (helical) follow at residues 158–178 (IAVA…RMMW) and 198–218 (IIML…ATLV). Position 227 (glutamate 227) interacts with Zn(2+).

The protein belongs to the peptidase M48B family. It depends on Zn(2+) as a cofactor.

The protein localises to the cell membrane. This chain is Protease HtpX homolog, found in Streptococcus pneumoniae (strain Hungary19A-6).